We begin with the raw amino-acid sequence, 229 residues long: uncharacterized protein (229 aa).

The PilZ domain maps to 102–217 (RRRTVRVEPD…REKVRRYVFE (116 aa)).

To A.aeolicus aq_820 and aq_1211.

This is an uncharacterized protein from Aquifex aeolicus (strain VF5).